Consider the following 623-residue polypeptide: Chaperone protein DnaK (623 aa).

Thr-175 is subject to Phosphothreonine; by autocatalysis. The tract at residues 580 to 623 (PEGAQGAGFDPNNMGGANAGNASAENDKKDDNVVDADYKVEDDK) is disordered. Positions 591 to 603 (NNMGGANAGNASA) are enriched in low complexity. A compositionally biased stretch (basic and acidic residues) spans 604 to 623 (ENDKKDDNVVDADYKVEDDK).

This sequence belongs to the heat shock protein 70 family.

Its function is as follows. Acts as a chaperone. This is Chaperone protein DnaK from Clostridium botulinum (strain Okra / Type B1).